A 535-amino-acid polypeptide reads, in one-letter code: UDP-N-acetylmuramoyl-L-alanyl-D-glutamate--2,6-diaminopimelate ligase (535 aa).

Leu67 provides a ligand contact to UDP-N-acetyl-alpha-D-muramoyl-L-alanyl-D-glutamate. 153 to 159 is a binding site for ATP; the sequence is GTSGKTT. Residues 195–196, Ser222, and Arg230 each bind UDP-N-acetyl-alpha-D-muramoyl-L-alanyl-D-glutamate; that span reads TT. Lys262 carries the N6-carboxylysine modification. Meso-2,6-diaminopimelate contacts are provided by residues Arg424, 448–451, Gly502, and Glu506; that span reads DNPR. The Meso-diaminopimelate recognition motif motif lies at 448–451; sequence DNPR.

This sequence belongs to the MurCDEF family. MurE subfamily. Mg(2+) serves as cofactor. In terms of processing, carboxylation is probably crucial for Mg(2+) binding and, consequently, for the gamma-phosphate positioning of ATP.

The protein resides in the cytoplasm. It catalyses the reaction UDP-N-acetyl-alpha-D-muramoyl-L-alanyl-D-glutamate + meso-2,6-diaminopimelate + ATP = UDP-N-acetyl-alpha-D-muramoyl-L-alanyl-gamma-D-glutamyl-meso-2,6-diaminopimelate + ADP + phosphate + H(+). It participates in cell wall biogenesis; peptidoglycan biosynthesis. Its function is as follows. Catalyzes the addition of meso-diaminopimelic acid to the nucleotide precursor UDP-N-acetylmuramoyl-L-alanyl-D-glutamate (UMAG) in the biosynthesis of bacterial cell-wall peptidoglycan. The protein is UDP-N-acetylmuramoyl-L-alanyl-D-glutamate--2,6-diaminopimelate ligase of Mycobacterium bovis (strain ATCC BAA-935 / AF2122/97).